A 362-amino-acid polypeptide reads, in one-letter code: Aminomethyltransferase (362 aa).

Belongs to the GcvT family. As to quaternary structure, the glycine cleavage system is composed of four proteins: P, T, L and H.

The catalysed reaction is N(6)-[(R)-S(8)-aminomethyldihydrolipoyl]-L-lysyl-[protein] + (6S)-5,6,7,8-tetrahydrofolate = N(6)-[(R)-dihydrolipoyl]-L-lysyl-[protein] + (6R)-5,10-methylene-5,6,7,8-tetrahydrofolate + NH4(+). In terms of biological role, the glycine cleavage system catalyzes the degradation of glycine. This chain is Aminomethyltransferase, found in Porphyromonas gingivalis (strain ATCC 33277 / DSM 20709 / CIP 103683 / JCM 12257 / NCTC 11834 / 2561).